We begin with the raw amino-acid sequence, 459 residues long: tRNA modification GTPase MnmE (459 aa).

(6S)-5-formyl-5,6,7,8-tetrahydrofolate is bound by residues Arg-20, Glu-85, and Arg-124. The TrmE-type G domain maps to 221–380 (GLSTVIIGRP…LEEAIQSLFY (160 aa)). Asn-231 is a K(+) binding site. GTP contacts are provided by residues 231-236 (NVGKSS), 250-256 (TDIPGTT), and 275-278 (DTAG). Ser-235 lines the Mg(2+) pocket. Residues Thr-250, Ile-252, and Thr-255 each coordinate K(+). Thr-256 serves as a coordination point for Mg(2+). A (6S)-5-formyl-5,6,7,8-tetrahydrofolate-binding site is contributed by Lys-459.

The protein belongs to the TRAFAC class TrmE-Era-EngA-EngB-Septin-like GTPase superfamily. TrmE GTPase family. Homodimer. Heterotetramer of two MnmE and two MnmG subunits. Requires K(+) as cofactor.

The protein resides in the cytoplasm. Functionally, exhibits a very high intrinsic GTPase hydrolysis rate. Involved in the addition of a carboxymethylaminomethyl (cmnm) group at the wobble position (U34) of certain tRNAs, forming tRNA-cmnm(5)s(2)U34. The sequence is that of tRNA modification GTPase MnmE from Bacillus velezensis (strain DSM 23117 / BGSC 10A6 / LMG 26770 / FZB42) (Bacillus amyloliquefaciens subsp. plantarum).